The sequence spans 600 residues: UvrABC system protein C (600 aa).

A GIY-YIG domain is found at 15–92 (EKPGCYLMKD…IKKYQPYYNV (78 aa)). Residues 197 to 232 (TSVKQDLTTKMEKASENLEFERAAEIRDQLKYIEET) form the UVR domain.

It belongs to the UvrC family. In terms of assembly, interacts with UvrB in an incision complex.

The protein resides in the cytoplasm. In terms of biological role, the UvrABC repair system catalyzes the recognition and processing of DNA lesions. UvrC both incises the 5' and 3' sides of the lesion. The N-terminal half is responsible for the 3' incision and the C-terminal half is responsible for the 5' incision. This is UvrABC system protein C from Lactobacillus acidophilus (strain ATCC 700396 / NCK56 / N2 / NCFM).